Here is a 377-residue protein sequence, read N- to C-terminus: 8-amino-7-oxononanoate synthase (377 aa).

R13 provides a ligand contact to substrate. 100 to 101 (GY) provides a ligand contact to pyridoxal 5'-phosphate. H125 contributes to the substrate binding site. Pyridoxal 5'-phosphate is bound by residues S171, H199, and T228. K231 is subject to N6-(pyridoxal phosphate)lysine. T345 provides a ligand contact to substrate.

Belongs to the class-II pyridoxal-phosphate-dependent aminotransferase family. BioF subfamily. In terms of assembly, homodimer. It depends on pyridoxal 5'-phosphate as a cofactor.

It carries out the reaction 6-carboxyhexanoyl-[ACP] + L-alanine + H(+) = (8S)-8-amino-7-oxononanoate + holo-[ACP] + CO2. The protein operates within cofactor biosynthesis; biotin biosynthesis. Its function is as follows. Catalyzes the decarboxylative condensation of pimeloyl-[acyl-carrier protein] and L-alanine to produce 8-amino-7-oxononanoate (AON), [acyl-carrier protein], and carbon dioxide. The sequence is that of 8-amino-7-oxononanoate synthase from Nitrosococcus oceani (strain ATCC 19707 / BCRC 17464 / JCM 30415 / NCIMB 11848 / C-107).